The following is a 188-amino-acid chain: GTP cyclohydrolase 1 (188 aa).

Zn(2+)-binding residues include C76, H79, and C148.

This sequence belongs to the GTP cyclohydrolase I family. In terms of assembly, toroid-shaped homodecamer, composed of two pentamers of five dimers.

It catalyses the reaction GTP + H2O = 7,8-dihydroneopterin 3'-triphosphate + formate + H(+). It functions in the pathway cofactor biosynthesis; 7,8-dihydroneopterin triphosphate biosynthesis; 7,8-dihydroneopterin triphosphate from GTP: step 1/1. In Caldanaerobacter subterraneus subsp. tengcongensis (strain DSM 15242 / JCM 11007 / NBRC 100824 / MB4) (Thermoanaerobacter tengcongensis), this protein is GTP cyclohydrolase 1.